Reading from the N-terminus, the 621-residue chain is Exonuclease 3'-5' domain-containing protein 2 (621 aa).

At 1–4 the chain is on the mitochondrial intermembrane side; the sequence is MSRQ. A helical transmembrane segment spans residues 5–25; that stretch reads NLVALTVTTLLGVAVGGFVLW. Residues 26-621 lie on the Cytoplasmic side of the membrane; sequence KGIQRRRRSK…FGEDLPIQLS (596 aa). Residues 34–68 form a disordered region; the sequence is SKTSPVTQQPQQKVLGSRELPPPEDDQLHSSAPRS. A compositionally biased stretch (polar residues) spans 36-47; it reads TSPVTQQPQQKV. A divalent metal cation-binding residues include aspartate 108, glutamate 110, and aspartate 246. One can recognise a 3'-5' exonuclease domain in the interval 155–247; that stretch reads ILADGTILKV…DQVIYAARDA (93 aa). The segment at 299–343 is disordered; the sequence is RLGEEVNGEATESQQKPRNKKSKMDGMVPGNHQGRDPRKHKRKPL.

It belongs to the EXD2 family. In terms of assembly, homodimer. Interacts with RBBP8, MRE11 and BRCA1. Mg(2+) is required as a cofactor. Mn(2+) serves as cofactor.

It localises to the mitochondrion outer membrane. Its subcellular location is the mitochondrion matrix. The protein localises to the nucleus. The protein resides in the chromosome. It carries out the reaction Exonucleolytic cleavage in the 3'- to 5'-direction to yield nucleoside 5'-phosphates.. In terms of biological role, exonuclease that has both 3'-5' exoribonuclease and exodeoxyribonuclease activities, depending on the divalent metal cation used as cofactor. In presence of Mg(2+), only shows 3'-5' exoribonuclease activity, while it shows both exoribonuclease and exodeoxyribonuclease activities in presence of Mn(2+). Acts as an exoribonuclease in mitochondrion, possibly by regulating ATP production and mitochondrial translation. Also involved in the response to DNA damage. Acts as 3'-5' exodeoxyribonuclease for double-strand breaks resection and efficient homologous recombination. Plays a key role in controlling the initial steps of chromosomal break repair, it is recruited to chromatin in a damage-dependent manner and functionally interacts with the MRN complex to accelerate resection through its 3'-5' exonuclease activity, which efficiently processes double-stranded DNA substrates containing nicks. Also involved in response to replicative stress: recruited to stalled forks and is required to stabilize and restart stalled replication forks by restraining excessive fork regression, thereby suppressing their degradation. This chain is Exonuclease 3'-5' domain-containing protein 2, found in Homo sapiens (Human).